The sequence spans 166 residues: Regulatory protein RecX (166 aa).

This sequence belongs to the RecX family.

The protein localises to the cytoplasm. Modulates RecA activity. The polypeptide is Regulatory protein RecX (Shigella dysenteriae serotype 1 (strain Sd197)).